Consider the following 236-residue polypeptide: uncharacterized protein (236 aa).

One can recognise a Response regulatory domain in the interval 3–116; sequence TCLIVDDELF…RLSKTLKRVR (114 aa). D54 is subject to 4-aspartylphosphate. The HTH LytTR-type domain occupies 135–235; that stretch reads LPCYSGSKLK…LKSLKQLFGF (101 aa).

This is an uncharacterized protein from Shewanella oneidensis (strain ATCC 700550 / JCM 31522 / CIP 106686 / LMG 19005 / NCIMB 14063 / MR-1).